Here is a 93-residue protein sequence, read N- to C-terminus: Small ribosomal subunit protein uS19 (93 aa).

Belongs to the universal ribosomal protein uS19 family.

In terms of biological role, protein S19 forms a complex with S13 that binds strongly to the 16S ribosomal RNA. This chain is Small ribosomal subunit protein uS19, found in Alkaliphilus oremlandii (strain OhILAs) (Clostridium oremlandii (strain OhILAs)).